A 757-amino-acid chain; its full sequence is MNLKVLLLLLGLSFLTVFALVYVLLTRQGSFSQSPRCPSIPPRIHPWTHPSQSQLFADLTPEELTAVMSFLTKHLGPGLVDAAQARPSDNCVFSVELQLPAKAAALAHLDRGGPPPVREALAIIFFGGQPKPNVSELVVGPLPHPSYMRDVTVERHGGPLPYYRRPMQKTEFVQIWRHLKEVELPKAPTFLASVLNYNGSTLAPLHSTASGFHAGDRATWIALYHNISGLGVFLHPVGLELLLDHGALDPADWVVQQVFYLGHYYADLAQLEWEFKVGRLEVIRVPLPTPGGASSLRPRVTPDPPLPPLQFSLQGPQYNIQGNSVTSPLWTFTFGHGVFSGLRIFDIRFKGERVAYEVSVQECLTVYGADSPKTMTIRYLDSSYGLGLNSRALVRGVDCPYQATMVDIHVLVGTGSVQLLPGAVCVFEEAQGLPLRRHHNGIGGHFYGGLASSSLVVRSVSSVGNYDYIWDFMLHPTGALEARVHATGYINTAFMSGGAESLLFGNRVGERVLGAVHTHAFHFKLDLDVAGLKNWVIAEDAVFKPVAAPWNPELQLQRPQLTRQVLSREDLAAFPWGSPLPRYLYLATNQTNAWGHQRGYRIQIHSPPGVHVPLESSEERALSWGRYQLVVTQRKEAEPHSSSIYYQNDMRSPATVFADFINNETLLGEDLVAWVTASFLHIPHAEDIPNTVTVGNRVGFLLRPYNFFNEDPSIFSPGSVYFERDQDAGLCSINPVACTQQLADCVPNLPSFSYEGL.

Topologically, residues 1–4 (MNLK) are cytoplasmic. Residues 5–25 (VLLLLLGLSFLTVFALVYVLL) form a helical membrane-spanning segment. Over 26 to 757 (TRQGSFSQSP…NLPSFSYEGL (732 aa)) the chain is Extracellular. N-linked (GlcNAc...) asparagine glycans are attached at residues asparagine 133, asparagine 198, and asparagine 226. Residue aspartate 381 is the Proton acceptor of the active site. Residues cysteine 399 and cysteine 425 are joined by a disulfide bond. Tyrosine 466 serves as the catalytic Schiff-base intermediate with substrate; via topaquinone. Residue tyrosine 466 is modified to 2',4',5'-topaquinone. Residues histidine 517 and histidine 519 each coordinate Cu(2+). 7 residues coordinate Ca(2+): aspartate 526, leucine 527, aspartate 528, glutamate 569, glutamate 638, phenylalanine 660, and asparagine 662. N-linked (GlcNAc...) asparagine glycosylation is present at asparagine 663. Ca(2+) is bound by residues glutamate 664, aspartate 670, and leucine 671. Residue histidine 681 participates in Cu(2+) binding. Residues cysteine 731 and cysteine 738 are joined by a disulfide bond.

It belongs to the copper/topaquinone oxidase family. Homodimer; disulfide-linked. Probably forms heterodimers with AOC3. It depends on Cu(2+) as a cofactor. The cofactor is Ca(2+). L-topaquinone serves as cofactor. Topaquinone (TPQ) is generated by copper-dependent autoxidation of a specific tyrosyl residue. Significantly much highly expressed in retina.

The protein localises to the cell membrane. It catalyses the reaction 2-phenylethylamine + O2 + H2O = 2-phenylacetaldehyde + H2O2 + NH4(+). The enzyme catalyses tryptamine + O2 + H2O = indole-3-acetaldehyde + H2O2 + NH4(+). It carries out the reaction tyramine + O2 + H2O = (4-hydroxyphenyl)acetaldehyde + H2O2 + NH4(+). Its function is as follows. Catalyzes the oxidative deamination of primary amines to the corresponding aldehydes with the concomitant production of hydrogen peroxide and ammonia. Has a preference for 2-phenylethylamine, tryptamine and tyramine. Could also act on methylamine and benzylamine but much less efficiently. The protein is Amine oxidase [copper-containing] 2 of Mus musculus (Mouse).